A 425-amino-acid chain; its full sequence is Pectate lyase L (425 aa).

Residues 1–25 form the signal peptide; that stretch reads MKYLNCFISTGLAAFFLVNSTSVLA. Cys28 and Cys114 are oxidised to a cystine. Ca(2+)-binding residues include Asp209, Asp233, Asp234, and Asp237. The active-site Proton acceptor is the Lys273. Positions 402, 413, 416, 418, and 423 each coordinate Ca(2+).

Belongs to the polysaccharide lyase 9 family. The cofactor is Ca(2+).

It localises to the secreted. It carries out the reaction Eliminative cleavage of (1-&gt;4)-alpha-D-galacturonan to give oligosaccharides with 4-deoxy-alpha-D-galact-4-enuronosyl groups at their non-reducing ends.. It participates in glycan metabolism; pectin degradation; 2-dehydro-3-deoxy-D-gluconate from pectin: step 2/5. Functionally, presents an endo-cleaving activity on polygalacturonate or partially methylated pectin. This is Pectate lyase L (pelL) from Dickeya chrysanthemi (Pectobacterium chrysanthemi).